The following is a 230-amino-acid chain: Protein FAM3A (230 aa).

The first 33 residues, 1–33 (MRLAGPLRIVVLVVSVGVTWIVVSILLGGPGSG), serve as a signal peptide directing secretion. Disulfide bonds link C59/C87 and C65/C222. The GG-type lectin domain occupies 68-226 (EHLAFRVVSG…LEMEGCIPRR (159 aa)).

The protein belongs to the FAM3 family. In similar amounts in testis, pancreas, adrenal, placenta, brain, fetal brain, liver, kidney, skeletal muscle and heart.

The protein localises to the secreted. Functionally, may act as a defensin against invading fungal microorganisms. The protein is Protein FAM3A (FAM3A) of Homo sapiens (Human).